The following is a 647-amino-acid chain: Meiotically up-regulated protein C8C9.04 (647 aa).

Disordered stretches follow at residues 1 to 241 (MTTN…ELKP) and 387 to 647 (RAQQ…KLFH). Residues 29 to 46 (KSTNAVEQNNNSSQASVT) show a composition bias toward polar residues. Over residues 49 to 67 (NKKKAAKRAKKKAAKKKKQ) the composition is skewed to basic residues. Positions 92–103 (TILQEPGFTQTI) are enriched in polar residues. A compositionally biased stretch (low complexity) spans 134–145 (PSASTSTAVPTT). The span at 146-155 (EARNTSITEP) shows a compositional bias: polar residues. The span at 156-177 (ANSPSSSSSSASTKSTATTQSA) shows a compositional bias: low complexity. Phosphoserine is present on residues Ser-162 and Ser-165. Thr-168 bears the Phosphothreonine mark. The span at 193-215 (QLGNSPASITSKPATTSAAQPSS) shows a compositional bias: polar residues. A phosphoserine mark is found at Ser-197 and Ser-200. Over residues 232–241 (AEKEIPELKP) the composition is skewed to basic and acidic residues. 3 stretches are compositionally biased toward polar residues: residues 390–406 (QPEQYESSVVQEATETV), 413–432 (VSSTVKNEVNVPSTIPTESE), and 488–508 (PSSTGQEPTTPSTPAKSAQSS). A Phosphoserine modification is found at Ser-396. 2 positions are modified to phosphoserine: Ser-489 and Ser-490. Position 491 is a phosphothreonine (Thr-491). Residues Ser-515, Ser-519, and Ser-523 each carry the phosphoserine modification. Residues 518–530 (ASAPSSPGTTSAA) show a composition bias toward low complexity. Over residues 561-589 (GSATTIPSPGSATTKPTPGSATTKPTPVS) the composition is skewed to polar residues. Residues 596-613 (AGTTKPAPAAGATATAEN) are compositionally biased toward low complexity. Basic residues predominate over residues 633 to 647 (SWFKRMKKSFGKLFH).

In terms of biological role, has a role in meiosis and sporulation. This chain is Meiotically up-regulated protein C8C9.04, found in Schizosaccharomyces pombe (strain 972 / ATCC 24843) (Fission yeast).